The following is a 443-amino-acid chain: Probable D-serine dehydratase (443 aa).

Residue lysine 118 is modified to N6-(pyridoxal phosphate)lysine.

The protein belongs to the serine/threonine dehydratase family. DsdA subfamily. It depends on pyridoxal 5'-phosphate as a cofactor.

It catalyses the reaction D-serine = pyruvate + NH4(+). This is Probable D-serine dehydratase from Vibrio campbellii (strain ATCC BAA-1116).